Reading from the N-terminus, the 379-residue chain is 1-deoxy-D-xylulose 5-phosphate reductoisomerase (379 aa).

6 residues coordinate NADPH: Thr10, Gly11, Ser12, Ile13, Asn39, and Asn121. Lys122 contacts 1-deoxy-D-xylulose 5-phosphate. Glu123 contributes to the NADPH binding site. A Mn(2+)-binding site is contributed by Asp147. Residues Ser148, Glu149, Ser173, and His196 each coordinate 1-deoxy-D-xylulose 5-phosphate. Residue Glu149 participates in Mn(2+) binding. Gly202 contacts NADPH. 1-deoxy-D-xylulose 5-phosphate is bound by residues Ser209, Asn214, Lys215, and Glu218. Glu218 lines the Mn(2+) pocket.

The protein belongs to the DXR family. Requires Mg(2+) as cofactor. Mn(2+) is required as a cofactor.

It carries out the reaction 2-C-methyl-D-erythritol 4-phosphate + NADP(+) = 1-deoxy-D-xylulose 5-phosphate + NADPH + H(+). It functions in the pathway isoprenoid biosynthesis; isopentenyl diphosphate biosynthesis via DXP pathway; isopentenyl diphosphate from 1-deoxy-D-xylulose 5-phosphate: step 1/6. Functionally, catalyzes the NADPH-dependent rearrangement and reduction of 1-deoxy-D-xylulose-5-phosphate (DXP) to 2-C-methyl-D-erythritol 4-phosphate (MEP). This Chlamydia caviae (strain ATCC VR-813 / DSM 19441 / 03DC25 / GPIC) (Chlamydophila caviae) protein is 1-deoxy-D-xylulose 5-phosphate reductoisomerase.